The primary structure comprises 1430 residues: MTVFRQENVDDYYDTGEELGSGQFAVVKKCREKSTGLQYAAKFIKKRRTKSSRRGVSREDIEREVSILKEIQHPNVITLHEVYENKTDVILILELVAGGELFDFLAEKESLTEEEATEFLKQILNGVYYLHSLQIAHFDLKPENIMLLDRNVPKPRIKIIDFGLAHKIDFGNEFKNIFGTPEFVAPEIVNYEPLGLEADMWSIGVITYILLSGASPFLGDTKQETLANVSAVNYEFEDEYFSNTSALAKDFIRRLLVKDPKKRMTIQDSLQHPWIKPKDTQQALSRKASAVNMEKFKKFAARKKWKQSVRLISLCQRLSRSFLSRSNMSVARSDDTLDEEDSFVMKAIIHAINDDNVPGLQHLLGSLSNYDVNQPNKHGTPPLLIAAGCGNIQILQLLIKRGSRIDVQDKGGSNAVYWAARHGHVDTLKFLSENKCPLDVKDKSGEMALHVAARYGHADVAQLLCSFGSNPNIQDKEEETPLHCAAWHGYYSVAKALCEAGCNVNIKNREGETPLLTASARGYHDIVECLAEHGADLNACDKDGHIALHLAVRRCQMEVIKTLLSQGCFVDYQDRHGNTPLHVACKDGNMPIVVALCEANCNLDISNKYGRTPLHLAANNGILDVVRYLCLMGASVEALTTDGKTAEDLARSEQHEHVAGLLARLRKDTHRGLFIQQLRPTQNLQPRIKLKLFGHSGSGKTTLVESLKCGLLRSFFRRRRPRLSSTNSSRFPPSPLASKPTVSVSINNLYPGCENVSVRSRSMMFEPGLTKGMLEVFVAPTHHPHCSADDQSTKAIDIQNAYLNGVGDFSVWEFSGNPVYFCCYDYFAANDPTSIHVVVFSLEEPYEIQLNQVIFWLSFLKSLVPVEEPIAFGGKLKNPLQVVLVATHADIMNVPRPAGGEFGYDKDTSLLKEIRNRFGNDLHISNKLFVLDAGASGSKDMKVLRNHLQEIRSQIVSVCPPMTHLCEKIISTLPSWRKLNGPNQLMSLQQFVYDVQDQLNPLASEEDLRRIAQQLHSTGEINIMQSETVQDVLLLDPRWLCTNVLGKLLSVETPRALHHYRGRYTVEDIQRLVPDSDVEELLQILDAMDICARDLSSGTMVDVPALIKTDNLHRSWADEEDEVMVYGGVRIVPVEHLTPFPCGIFHKVQVNLCRWIHQQSTEGDADIRLWVNGCKLANRGAELLVLLVNHGQGIEVQVRGLETEKIKCCLLLDSVCSTIENVMATTLPGLLTVKHYLSPQQLREHHEPVMIYQPRDFFRAQTLKETSLTNTMGGYKESFSSIMCFGCHDVYSQASLGMDIHASDLNLLTRRKLSRLLDPPDPLGKDWCLLAMNLGLPDLVAKYNTSNGAPKDFLPSPLHALLREWTTYPESTVGTLMSKLRELGRRDAADFLLKASSVFKINLDGNGQEAYASSCNSGTSYNSISSVVSR.

In terms of domain architecture, Protein kinase spans 13-275; the sequence is YDTGEELGSG…IQDSLQHPWI (263 aa). Residues 19–27, Lys-42, 94–96, and Glu-100 contribute to the ATP site; these read LGSGQFAVV and ELV. Catalysis depends on Asp-139, which acts as the Proton acceptor. Position 161 (Asp-161) interacts with ATP. The interval 267 to 334 is calmodulin-binding; the sequence is QDSLQHPWIK…RSNMSVARSD (68 aa). Phosphoserine; by RPS6KA1 and RPS6KA3 is present on Ser-289. The segment at 292–301 is autoinhibitory domain; that stretch reads NMEKFKKFAA. Phosphoserine; by autocatalysis is present on Ser-308. Residues Ser-319 and Ser-333 each carry the phosphoserine modification. ANK repeat units lie at residues 378 to 407, 411 to 440, 444 to 473, 477 to 506, 510 to 539, 543 to 572, 576 to 605, and 609 to 638; these read HGTP…RIDV, GGSN…PLDV, SGEM…NPNI, EEET…NVNI, EGET…DLNA, DGHI…FVDY, HGNT…NLDI, and YGRT…SVEA. Residues 681 to 955 form the Roc domain; it reads TQNLQPRIKL…NHLQEIRSQI (275 aa). Ser-734 carries the phosphoserine; by MAPK1 modification. Residues 875–904 form an ANK 9 repeat; that stretch reads KLKNPLQVVLVATHADIMNVPRPAGGEFGY. A Phosphoserine modification is found at Ser-1115. The ANK 10 repeat unit spans residues 1162-1196; sequence EGDADIRLWVNGCKLANRGAELLVLLVNHGQGIEV. The 85-residue stretch at 1312-1396 folds into the Death domain; sequence KLSRLLDPPD…DAADFLLKAS (85 aa).

Belongs to the protein kinase superfamily. CAMK Ser/Thr protein kinase family. DAP kinase subfamily. In terms of assembly, interacts with KLHL20. Interacts (via death domain) with MAPK1 and MAPK3. Interacts with MAP1B (via N-terminus). Interacts with PRKD1 in an oxidative stress-regulated manner. Interacts with PIN1, PDCD6, BECN1, TSC2 and STX1A. Interacts (via kinase domain) with DAPK3 (via kinase domain). Interacts with GRINB. Interacts (via death domain) with UNC5B (via death domain). Interacts with UNC5C (via death domain). The cofactor is Mg(2+). In terms of processing, ubiquitinated by the BCR(KLHL20) E3 ubiquitin ligase complex, leading to its degradation by the proteasome. Removal of the C-terminal tail of isoform 2 (corresponding to amino acids 296-337 of isoform 2) by proteolytic cleavage stimulates maximally its membrane-blebbing function. Post-translationally, in response to mitogenic stimulation (PMA or EGF), phosphorylated at Ser-289; phosphorylation suppresses DAPK1 pro-apoptotic function. Autophosphorylation at Ser-308 inhibits its catalytic activity. Phosphorylation at Ser-734 by MAPK1 increases its catalytic activity and promotes cytoplasmic retention of MAPK1. Endoplasmic-stress can cause dephosphorylation at Ser-308. Isoform 2 is expressed in normal intestinal tissue as well as in colorectal carcinomas.

It is found in the cytoplasm. It localises to the cytoskeleton. It carries out the reaction L-seryl-[protein] + ATP = O-phospho-L-seryl-[protein] + ADP + H(+). The enzyme catalyses L-threonyl-[protein] + ATP = O-phospho-L-threonyl-[protein] + ADP + H(+). Its activity is regulated as follows. Activated by Ca(2+)/calmodulin. Regulated by a locking mechanism, involving autophosphorylation at Ser-308 and calmodulin binding. In the inactive state, Ser-308 is phosphorylated. Activation involves its dephosphorylation and a release-of-autoinhibition mechanism where binding of calmodulin induces a conformational change that relieves the steric block of the active site by the autoinhibitory domain. Activity is modulated by UNC5B and NTN1. UNC5B activates it by inhibiting the phosphorylation at Ser-308, whereas NTN1 inhibits UNC5B-mediated activation of DAPK1. Endoplasmic-stress activates by causing Ser-308 dephosphorylation. Calcium/calmodulin-dependent serine/threonine kinase involved in multiple cellular signaling pathways that trigger cell survival, apoptosis, and autophagy. Regulates both type I apoptotic and type II autophagic cell deaths signal, depending on the cellular setting. The former is caspase-dependent, while the latter is caspase-independent and is characterized by the accumulation of autophagic vesicles. Phosphorylates PIN1 resulting in inhibition of its catalytic activity, nuclear localization, and cellular function. Phosphorylates TPM1, enhancing stress fiber formation in endothelial cells. Phosphorylates STX1A and significantly decreases its binding to STXBP1. Phosphorylates PRKD1 and regulates JNK signaling by binding and activating PRKD1 under oxidative stress. Phosphorylates BECN1, reducing its interaction with BCL2 and BCL2L1 and promoting the induction of autophagy. Phosphorylates TSC2, disrupting the TSC1-TSC2 complex and stimulating mTORC1 activity in a growth factor-dependent pathway. Phosphorylates RPS6, MYL9 and DAPK3. Acts as a signaling amplifier of NMDA receptors at extrasynaptic sites for mediating brain damage in stroke. Cerebral ischemia recruits DAPK1 into the NMDA receptor complex and it phosphorylates GRINB at Ser-1303 inducing injurious Ca(2+) influx through NMDA receptor channels, resulting in an irreversible neuronal death. Required together with DAPK3 for phosphorylation of RPL13A upon interferon-gamma activation which is causing RPL13A involvement in transcript-selective translation inhibition. Functionally, isoform 2 cannot induce apoptosis but can induce membrane blebbing. The polypeptide is Death-associated protein kinase 1 (DAPK1) (Homo sapiens (Human)).